Reading from the N-terminus, the 601-residue chain is Elongation factor 4 (601 aa).

Positions 6 to 188 (AHIRNFSIIA…QIVRKVPPPK (183 aa)) constitute a tr-type G domain. GTP is bound by residues 18-23 (DHGKST) and 135-138 (NKVD).

The protein belongs to the TRAFAC class translation factor GTPase superfamily. Classic translation factor GTPase family. LepA subfamily.

Its subcellular location is the cell inner membrane. It carries out the reaction GTP + H2O = GDP + phosphate + H(+). In terms of biological role, required for accurate and efficient protein synthesis under certain stress conditions. May act as a fidelity factor of the translation reaction, by catalyzing a one-codon backward translocation of tRNAs on improperly translocated ribosomes. Back-translocation proceeds from a post-translocation (POST) complex to a pre-translocation (PRE) complex, thus giving elongation factor G a second chance to translocate the tRNAs correctly. Binds to ribosomes in a GTP-dependent manner. In Anaeromyxobacter sp. (strain Fw109-5), this protein is Elongation factor 4.